The following is a 131-amino-acid chain: Cuticle protein 79, isoform B (131 aa).

Repeat copies occupy residues 37–40, 45–48, and 53–56.

Its function is as follows. Component of the cuticle of migratory locust which contains more than 100 different structural proteins. The sequence is that of Cuticle protein 79, isoform B from Locusta migratoria (Migratory locust).